We begin with the raw amino-acid sequence, 517 residues long: Crotonobetaine/carnitine--CoA ligase (517 aa).

Belongs to the ATP-dependent AMP-binding enzyme family.

It catalyses the reaction 4-(trimethylamino)butanoate + ATP + CoA = 4-(trimethylamino)butanoyl-CoA + AMP + diphosphate. The catalysed reaction is crotonobetaine + ATP + CoA = crotonobetainyl-CoA + AMP + diphosphate. The enzyme catalyses (R)-carnitine + ATP + CoA = (R)-carnitinyl-CoA + AMP + diphosphate. It functions in the pathway amine and polyamine metabolism; carnitine metabolism. Functionally, catalyzes the transfer of CoA to carnitine, generating the initial carnitinyl-CoA needed for the CaiB reaction cycle. Also has activity toward crotonobetaine and gamma-butyrobetaine. In Escherichia coli (strain SE11), this protein is Crotonobetaine/carnitine--CoA ligase.